Reading from the N-terminus, the 310-residue chain is Protoheme IX farnesyltransferase (310 aa).

8 consecutive transmembrane segments (helical) span residues 31–51 (VIEL…RGSV), 53–73 (PLLI…ANTL), 102–122 (NALI…WGTS), 124–144 (LLSG…YTLL), 149–169 (TSQN…IGWS), 170–190 (AVTG…FFWT), 242–262 (LATG…FLVM), and 289–309 (LAVV…TLLG).

This sequence belongs to the UbiA prenyltransferase family. Protoheme IX farnesyltransferase subfamily.

The protein localises to the cell membrane. It carries out the reaction heme b + (2E,6E)-farnesyl diphosphate + H2O = Fe(II)-heme o + diphosphate. The protein operates within porphyrin-containing compound metabolism; heme O biosynthesis; heme O from protoheme: step 1/1. Functionally, converts heme B (protoheme IX) to heme O by substitution of the vinyl group on carbon 2 of heme B porphyrin ring with a hydroxyethyl farnesyl side group. This is Protoheme IX farnesyltransferase from Mycobacterium sp. (strain JLS).